We begin with the raw amino-acid sequence, 347 residues long: MQIKEHASLKAFHTFGIEQTCSYLAIVDSIDDVISLYQNPAFQSLPKLFLGKGSNVLFTEHFDGLVIVNRLLGKSVSETHEDYLLHVQGGEDWPSLVAWCVAQGMGGIENLALIPGCAGSAPIQNIGAYGVELKDLCSYVDVLDLTTLKTRRMSAEDCEFGYRDSVFKHDLYEKCFVTAIGLKLPKRWTPKNQYGPLQNIPENELSPNAIFERVCQVRMEKLPDPAKVGNAGSFFKNPVISQDHYDQLVRKHSDMVAYPANEGMKVAAGWLIDQCGLKGISVNGAQVNPLQALVLTNVDNCSADDVVALASLVKRAVWDKYQIELEHEVRFMNRQGETNLAKIEAAQ.

Positions 15–187 (FGIEQTCSYL…TAIGLKLPKR (173 aa)) constitute an FAD-binding PCMH-type domain. Arg-163 is a catalytic residue. Ser-233 functions as the Proton donor in the catalytic mechanism. Glu-328 is a catalytic residue.

This sequence belongs to the MurB family. The cofactor is FAD.

It localises to the cytoplasm. The catalysed reaction is UDP-N-acetyl-alpha-D-muramate + NADP(+) = UDP-N-acetyl-3-O-(1-carboxyvinyl)-alpha-D-glucosamine + NADPH + H(+). The protein operates within cell wall biogenesis; peptidoglycan biosynthesis. Its function is as follows. Cell wall formation. This chain is UDP-N-acetylenolpyruvoylglucosamine reductase, found in Vibrio parahaemolyticus serotype O3:K6 (strain RIMD 2210633).